A 198-amino-acid chain; its full sequence is Putative pseudouridine methyltransferase (198 aa).

Residues Met-132 and Cys-186 each coordinate S-adenosyl-L-methionine.

It belongs to the methyltransferase superfamily. TrmY family.

The protein localises to the cytoplasm. The protein is Putative pseudouridine methyltransferase of Shewanella baltica (strain OS185).